The primary structure comprises 899 residues: Protein translocase subunit SecA (899 aa).

Residues Gln87, 105 to 109, and Asp516 each bind ATP; that span reads GEGKT. Zn(2+) contacts are provided by Cys884, Cys886, Cys895, and His896.

This sequence belongs to the SecA family. Monomer and homodimer. Part of the essential Sec protein translocation apparatus which comprises SecA, SecYEG and auxiliary proteins SecDF. Other proteins may also be involved. Requires Zn(2+) as cofactor.

It localises to the cell inner membrane. It is found in the cytoplasm. It carries out the reaction ATP + H2O + cellular proteinSide 1 = ADP + phosphate + cellular proteinSide 2.. In terms of biological role, part of the Sec protein translocase complex. Interacts with the SecYEG preprotein conducting channel. Has a central role in coupling the hydrolysis of ATP to the transfer of proteins into and across the cell membrane, serving as an ATP-driven molecular motor driving the stepwise translocation of polypeptide chains across the membrane. This is Protein translocase subunit SecA from Borreliella burgdorferi (strain ZS7) (Borrelia burgdorferi).